Reading from the N-terminus, the 1179-residue chain is Calcium-activated potassium channel subunit alpha-1 (1179 aa).

Positions 1 to 24 are enriched in gly residues; that stretch reads MANGGGGGGGSSGGGGGGGGGGSG. The tract at residues 1–62 is disordered; that stretch reads MANGGGGGGG…SSSSSSSSSV (62 aa). Over 1-87 the chain is Extracellular; sequence MANGGGGGGG…VPCDSRGQRM (87 aa). Low complexity predominate over residues 41-61; sequence SSSSSSSSSSSSSSSSSSSSS. A helical membrane pass occupies residues 88-108; the sequence is WWAFLASSMVTFFGGLFIILL. Topologically, residues 109 to 179 are cytoplasmic; sequence WRTLKYLWTV…MISAQTLTGR (71 aa). 3 S-palmitoyl cysteine lipidation sites follow: Cys119, Cys120, and Cys122. A helical transmembrane segment spans residues 180-200; it reads VLVVLVFALSIGALVIYFIDS. Over 201–215 the chain is Extracellular; the sequence is SNPIESCQNFYKDFT. A helical membrane pass occupies residues 216–236; it reads LQIDMAFNVFFLLYFGLRFIA. The Cytoplasmic segment spans residues 237–240; it reads ANDK. The chain crosses the membrane as a helical span at residues 241-261; the sequence is LWFWLEVNSVVDFFTVPPVFV. Topologically, residues 262-265 are extracellular; sequence SVYL. Residues 266–286 traverse the membrane as a helical; Voltage-sensor segment; that stretch reads NRSWLGLRFLRALRLIQFSEI. At 287–301 the chain is on the cytoplasmic side; sequence LQFLNILKTSNSIKL. Residues 302-322 traverse the membrane as a helical segment; that stretch reads VNLLSIFISTWLTAAGFIHLV. The Extracellular portion of the chain corresponds to 323–336; the sequence is ENSGDPWENFQNNQ. An intramembrane region (pore-forming) is located at residues 337-359; sequence ALTYWECVYLLMVTMSTVGYGDV. A Selectivity for potassium motif is present at residues 353 to 356; it reads TVGY. At 360–368 the chain is on the extracellular side; sequence YAKTTLGRL. A helical membrane pass occupies residues 369-389; sequence FMVFFILGGLAMFASYVPEII. Residues 390-1179 lie on the Cytoplasmic side of the membrane; that stretch reads ELIGNRKKYG…KQKYVQEERL (790 aa). Positions 408–550 constitute an RCK N-terminal 1 domain; the sequence is RKHIVVCGHI…WNWKEGDDAI (143 aa). Positions 440, 463, and 465 each coordinate Mg(2+). The tract at residues 557–577 is segment S7; that stretch reads LGFIAQSCLAQGLSTMLANLF. The segment S8 stretch occupies residues 614–634; that stretch reads LSFPTVCELCFVKLKLLMIAI. The interval 678–682 is heme-binding motif; sequence CKACH. Positions 702–730 are disordered; sequence EQPSTLSPKKKQRNGGMRNSPNSSPKLMR. Thr706 is subject to Phosphothreonine. Ser708, Ser721, and Ser725 each carry phosphoserine. Residues 780–800 are segment S9; sequence VLSGHVVVCIFGDVSSALIGL. Residues 782–926 form the RCK N-terminal 2 domain; the sequence is SGHVVVCIFG…MDRSSPDNSP (145 aa). At Thr913 the chain carries Phosphothreonine. Phosphoserine occurs at positions 921 and 925. The Calcium bowl signature appears at 946-968; it reads TELVNDTNVQFLDQDDDDDPDTE. Residues Gln955, Asp958, Asp961, and Asp963 each coordinate Ca(2+). The segment S10 stretch occupies residues 975–995; sequence FACGTAFAVSVLDSLMSATYF. Positions 1129-1154 are enriched in low complexity; that stretch reads RASLSHSSHSSQSSSKKSSSVHSIPS. Residues 1129 to 1179 are disordered; it reads RASLSHSSHSSQSSSKKSSSVHSIPSTANRQNRPKSRESRDKQKYVQEERL. Residues 1163 to 1179 are compositionally biased toward basic and acidic residues; sequence KSRESRDKQKYVQEERL. Phosphoserine occurs at positions 1164 and 1167.

Belongs to the potassium channel family. Calcium-activated (TC 1.A.1.3) subfamily. KCa1.1/KCNMA1 sub-subfamily. As to quaternary structure, homotetramer; which constitutes the calcium-activated potassium channel. Interacts with beta subunits KCNMB1, KCNMB2, KCNMB3 and KCNMB4. Interacts with gamma subunits LRRC26, LRRC38, LRRC52 and LRRC55. Beta and gamma subunits are accessory, and modulate its activity. Interacts with RAB11B. Post-translationally, phosphorylated. Phosphorylation by kinases such as PKA and/or PKG. In smooth muscles, phosphorylation affects its activity. Palmitoylation by ZDHHC22 and ZDHHC23 within the intracellular linker between the S0 and S1 transmembrane domains regulates localization to the plasma membrane. Depalmitoylated by LYPLA1 and LYPLAL1, leading to retard exit from the trans-Golgi network.

The protein localises to the cell membrane. The protein resides in the endoplasmic reticulum membrane. It catalyses the reaction K(+)(in) = K(+)(out). Its activity is regulated as follows. Ethanol and carbon monoxide-bound heme increase channel activation. Heme inhibits channel activation. Potassium channel activated by both membrane depolarization or increase in cytosolic Ca(2+) that mediates export of K(+). It is also activated by the concentration of cytosolic Mg(2+). Its activation dampens the excitatory events that elevate the cytosolic Ca(2+) concentration and/or depolarize the cell membrane. It therefore contributes to repolarization of the membrane potential. Plays a key role in controlling excitability in a number of systems, such as regulation of the contraction of smooth muscle, the tuning of hair cells in the cochlea, regulation of transmitter release, and innate immunity. In smooth muscles, its activation by high level of Ca(2+), caused by ryanodine receptors in the sarcoplasmic reticulum, regulates the membrane potential. In cochlea cells, its number and kinetic properties partly determine the characteristic frequency of each hair cell and thereby helps to establish a tonotopic map. Kinetics of KCNMA1 channels are determined by alternative splicing, phosphorylation status and its combination with modulating beta subunits. Highly sensitive to both iberiotoxin (IbTx) and charybdotoxin (CTX). Functionally, potassium channel activated by both membrane depolarization or increase in cytosolic Ca(2+) that mediates export of K(+). This Oryctolagus cuniculus (Rabbit) protein is Calcium-activated potassium channel subunit alpha-1 (KCNMA1).